We begin with the raw amino-acid sequence, 209 residues long: Translation initiation factor IF-3 (209 aa).

It belongs to the IF-3 family. Monomer.

The protein resides in the cytoplasm. Functionally, IF-3 binds to the 30S ribosomal subunit and shifts the equilibrium between 70S ribosomes and their 50S and 30S subunits in favor of the free subunits, thus enhancing the availability of 30S subunits on which protein synthesis initiation begins. This Chlorobium phaeobacteroides (strain DSM 266 / SMG 266 / 2430) protein is Translation initiation factor IF-3.